Reading from the N-terminus, the 162-residue chain is uncharacterized protein (162 aa).

This sequence belongs to the M.jannaschii MJ0150/MJ0739/MJ0745/MJ1460/MJ1642 family.

This is an uncharacterized protein from Methanocaldococcus jannaschii (strain ATCC 43067 / DSM 2661 / JAL-1 / JCM 10045 / NBRC 100440) (Methanococcus jannaschii).